Consider the following 78-residue polypeptide: MPVTKSYFMTVVVVLILVDETTGGLFGFRSSKRQEPWIACELYQGLCRNACQKYEIQYLSCPKTRKCCLKYPRKITSF.

The first 23 residues, 1-23, serve as a signal peptide directing secretion; that stretch reads MPVTKSYFMTVVVVLILVDETTG. Intrachain disulfides connect Cys-40-Cys-67, Cys-47-Cys-61, and Cys-51-Cys-68.

The protein belongs to the beta-defensin family. As to expression, highly expressed in the cauda epididymis.

It localises to the secreted. Has antibacterial activity. The protein is Beta-defensin 29 (Defb29) of Mus musculus (Mouse).